Consider the following 166-residue polypeptide: Large ribosomal subunit protein uL10 (166 aa).

The protein belongs to the universal ribosomal protein uL10 family. In terms of assembly, part of the ribosomal stalk of the 50S ribosomal subunit. The N-terminus interacts with L11 and the large rRNA to form the base of the stalk. The C-terminus forms an elongated spine to which L12 dimers bind in a sequential fashion forming a multimeric L10(L12)X complex.

Its function is as follows. Forms part of the ribosomal stalk, playing a central role in the interaction of the ribosome with GTP-bound translation factors. In Streptococcus uberis (strain ATCC BAA-854 / 0140J), this protein is Large ribosomal subunit protein uL10.